An 822-amino-acid polypeptide reads, in one-letter code: Microcephalin (822 aa).

The BRCT 1 domain maps to 10-99; the sequence is AFLKDVVAYV…ALVDESLFPA (90 aa). 3 disordered regions span residues 182-203, 219-243, and 266-295; these read MKEK…SQQN, PLSS…DQER, and SSFY…ESIN. 2 stretches are compositionally biased toward polar residues: residues 189-203 and 219-235; these read LSPT…SQQN and PLSS…SSFG. Residues S273, S290, and S327 each carry the phosphoserine modification. A Phosphothreonine modification is found at T329. Disordered stretches follow at residues 335 to 366, 498 to 567, and 594 to 636; these read EHQV…LKKR, NDSP…SPED, and TGYS…PTRT. Residues 522–541 are compositionally biased toward polar residues; it reads HPDTLSSSAHHITPLKGNST. 2 stretches are compositionally biased toward basic and acidic residues: residues 542 to 553 and 625 to 634; these read ETRDPGDGKGSP and KKSEKEEKPT. BRCT domains follow at residues 627-717 and 738-820; these read SEKE…PFEL and YQGT…NYQL.

Interacts with CDC27 and maybe other components of the APC/C complex. Interacts with histone variant H2AX under DNA damage conditions. High levels of expression are found in the developing forebrain and, in particular, in the walls of the lateral ventricles.

The protein localises to the cytoplasm. It is found in the cytoskeleton. The protein resides in the microtubule organizing center. It localises to the centrosome. Its function is as follows. Implicated in chromosome condensation and DNA damage induced cellular responses. May play a role in neurogenesis and regulation of the size of the cerebral cortex. The sequence is that of Microcephalin from Mus musculus (Mouse).